Reading from the N-terminus, the 120-residue chain is NAD(P)H-quinone oxidoreductase subunit 3, chloroplastic (120 aa).

A run of 3 helical transmembrane segments spans residues 9–29 (IFWA…LISA), 64–84 (MFAL…PWAM), and 88–108 (VLGV…IVGL).

This sequence belongs to the complex I subunit 3 family. As to quaternary structure, NDH is composed of at least 16 different subunits, 5 of which are encoded in the nucleus.

The protein resides in the plastid. It is found in the chloroplast thylakoid membrane. It catalyses the reaction a plastoquinone + NADH + (n+1) H(+)(in) = a plastoquinol + NAD(+) + n H(+)(out). The enzyme catalyses a plastoquinone + NADPH + (n+1) H(+)(in) = a plastoquinol + NADP(+) + n H(+)(out). In terms of biological role, NDH shuttles electrons from NAD(P)H:plastoquinone, via FMN and iron-sulfur (Fe-S) centers, to quinones in the photosynthetic chain and possibly in a chloroplast respiratory chain. The immediate electron acceptor for the enzyme in this species is believed to be plastoquinone. Couples the redox reaction to proton translocation, and thus conserves the redox energy in a proton gradient. The protein is NAD(P)H-quinone oxidoreductase subunit 3, chloroplastic of Citrus sinensis (Sweet orange).